The primary structure comprises 212 residues: Protein GrpE (212 aa).

The interval 1 to 68 is disordered; the sequence is MAETSNNKTS…ELESAKKEIE (68 aa). Over residues 9 to 30 the composition is skewed to basic and acidic residues; the sequence is TSEEAKANEKKSQSETLEESKL. The segment covering 40–60 has biased composition (low complexity); it reads ETTQTESMETAETETSLQTEL.

It belongs to the GrpE family. Homodimer.

Its subcellular location is the cytoplasm. In terms of biological role, participates actively in the response to hyperosmotic and heat shock by preventing the aggregation of stress-denatured proteins, in association with DnaK and GrpE. It is the nucleotide exchange factor for DnaK and may function as a thermosensor. Unfolded proteins bind initially to DnaJ; upon interaction with the DnaJ-bound protein, DnaK hydrolyzes its bound ATP, resulting in the formation of a stable complex. GrpE releases ADP from DnaK; ATP binding to DnaK triggers the release of the substrate protein, thus completing the reaction cycle. Several rounds of ATP-dependent interactions between DnaJ, DnaK and GrpE are required for fully efficient folding. The sequence is that of Protein GrpE from Leptospira interrogans serogroup Icterohaemorrhagiae serovar copenhageni (strain Fiocruz L1-130).